We begin with the raw amino-acid sequence, 239 residues long: Large ribosomal subunit protein uL3 (239 aa).

Disordered regions lie at residues 140–164 (SHRSIGSTGGRQDPGKTWKNKKMPG) and 211–239 (PLPKEAPKPGKFKVAGEQAAEAPAMQEGA). Glutamine 151 bears the N5-methylglutamine mark.

This sequence belongs to the universal ribosomal protein uL3 family. In terms of assembly, part of the 50S ribosomal subunit. Forms a cluster with proteins L14 and L19. In terms of processing, methylated by PrmB.

Its function is as follows. One of the primary rRNA binding proteins, it binds directly near the 3'-end of the 23S rRNA, where it nucleates assembly of the 50S subunit. The chain is Large ribosomal subunit protein uL3 from Bradyrhizobium sp. (strain ORS 278).